The chain runs to 137 residues: Large ribosomal subunit protein uL16 (137 aa).

The protein belongs to the universal ribosomal protein uL16 family. Part of the 50S ribosomal subunit.

Binds 23S rRNA and is also seen to make contacts with the A and possibly P site tRNAs. This chain is Large ribosomal subunit protein uL16, found in Chlamydia abortus (strain DSM 27085 / S26/3) (Chlamydophila abortus).